The sequence spans 335 residues: N-acetyl-gamma-glutamyl-phosphate reductase (335 aa).

Residue Cys-156 is part of the active site.

This sequence belongs to the NAGSA dehydrogenase family. Type 1 subfamily.

It localises to the cytoplasm. It carries out the reaction N-acetyl-L-glutamate 5-semialdehyde + phosphate + NADP(+) = N-acetyl-L-glutamyl 5-phosphate + NADPH + H(+). It participates in amino-acid biosynthesis; L-arginine biosynthesis; N(2)-acetyl-L-ornithine from L-glutamate: step 3/4. Its function is as follows. Catalyzes the NADPH-dependent reduction of N-acetyl-5-glutamyl phosphate to yield N-acetyl-L-glutamate 5-semialdehyde. The chain is N-acetyl-gamma-glutamyl-phosphate reductase from Aeromonas hydrophila subsp. hydrophila (strain ATCC 7966 / DSM 30187 / BCRC 13018 / CCUG 14551 / JCM 1027 / KCTC 2358 / NCIMB 9240 / NCTC 8049).